The sequence spans 233 residues: Protein TIPIN homolog (233 aa).

The segment covering 1–14 (MDEMEDFFENDELD) has biased composition (acidic residues). Disordered stretches follow at residues 1–39 (MDEM…RVVE) and 134–233 (GETG…NNDW). Composition is skewed to basic and acidic residues over residues 163 to 190 (DLFK…KTAE) and 197 to 216 (EEYR…AKEA). Positions 217–227 (ADEDALMEDFG) are enriched in acidic residues.

Belongs to the CSM3 family.

The protein localises to the cytoplasm. Its subcellular location is the nucleus. Required for normal progression of S-phase. Important for cell survival after DNA damage or replication stress. The polypeptide is Protein TIPIN homolog (Caenorhabditis elegans).